Reading from the N-terminus, the 466-residue chain is Histidine--tRNA ligase (466 aa).

Belongs to the class-II aminoacyl-tRNA synthetase family. As to quaternary structure, homodimer.

The protein resides in the cytoplasm. The enzyme catalyses tRNA(His) + L-histidine + ATP = L-histidyl-tRNA(His) + AMP + diphosphate + H(+). This Xylella fastidiosa (strain M12) protein is Histidine--tRNA ligase.